Consider the following 163-residue polypeptide: Small ribosomal subunit protein uS3m (163 aa).

Residues 1–31 constitute a mitochondrion transit peptide; it reads MAASLIRQTKLLSVFSSAGCFRSIHSTAACL.

This sequence belongs to the universal ribosomal protein uS3 family. Component of the mitochondrial ribosome small subunit (28S) which comprises a 12S rRNA and about 30 distinct proteins.

It is found in the mitochondrion. The chain is Small ribosomal subunit protein uS3m (mrps24) from Danio rerio (Zebrafish).